The sequence spans 131 residues: Snaclec A13 (131 aa).

3 disulfide bridges follow: Cys4-Cys15, Cys32-Cys125, and Cys100-Cys117. The C-type lectin domain occupies 11–126 (YEGHCYKVFN…CELAYHFICM (116 aa)).

This sequence belongs to the snaclec family. In terms of assembly, heterodimer; disulfide-linked. In terms of tissue distribution, expressed by the venom gland.

It localises to the secreted. Functionally, interferes with one step of hemostasis (modulation of platelet aggregation, or coagulation cascade, for example). In Macrovipera lebetinus (Levantine viper), this protein is Snaclec A13.